Here is a 74-residue protein sequence, read N- to C-terminus: DNA-directed RNA polymerase subunit omega (74 aa).

The protein belongs to the RNA polymerase subunit omega family. The RNAP catalytic core consists of 2 alpha, 1 beta, 1 beta' and 1 omega subunit. When a sigma factor is associated with the core the holoenzyme is formed, which can initiate transcription.

The catalysed reaction is RNA(n) + a ribonucleoside 5'-triphosphate = RNA(n+1) + diphosphate. In terms of biological role, promotes RNA polymerase assembly. Latches the N- and C-terminal regions of the beta' subunit thereby facilitating its interaction with the beta and alpha subunits. The protein is DNA-directed RNA polymerase subunit omega of Lactobacillus acidophilus (strain ATCC 700396 / NCK56 / N2 / NCFM).